The primary structure comprises 218 residues: Glutathione S-transferase Mu 2 (218 aa).

The region spanning P2–G88 is the GST N-terminal domain. Position 7–8 (Y7–W8) interacts with glutathione. 2 positions are modified to phosphoserine: S27 and S44. Glutathione contacts are provided by residues R43 to W46, K50, N59 to L60, and Q72 to S73. A GST C-terminal domain is found at T90–V208. Y116 lines the substrate pocket.

Belongs to the GST superfamily. Mu family. In terms of assembly, homodimer.

Its subcellular location is the cytoplasm. It carries out the reaction RX + glutathione = an S-substituted glutathione + a halide anion + H(+). The enzyme catalyses 11(S)-hydroxy-14(S),15(S)-epoxy-(5Z,8Z,12E)-eicosatrienoate + glutathione = (11S,15S)-dihydroxy-14(R)-S-glutathionyl-(5Z,8Z,12E)-eicosatrienoate. Functionally, conjugation of reduced glutathione to a wide number of exogenous and endogenous hydrophobic electrophiles. Participates in the formation of novel hepoxilin regioisomers. Has activity toward aflatoxin B(1)-8,9-epoxide (AFBO). This Macaca fascicularis (Crab-eating macaque) protein is Glutathione S-transferase Mu 2 (GSTM2).